A 215-amino-acid polypeptide reads, in one-letter code: Probable transaldolase (215 aa).

Lysine 83 serves as the catalytic Schiff-base intermediate with substrate.

This sequence belongs to the transaldolase family. Type 3B subfamily.

It is found in the cytoplasm. It catalyses the reaction D-sedoheptulose 7-phosphate + D-glyceraldehyde 3-phosphate = D-erythrose 4-phosphate + beta-D-fructose 6-phosphate. It functions in the pathway carbohydrate degradation; pentose phosphate pathway; D-glyceraldehyde 3-phosphate and beta-D-fructose 6-phosphate from D-ribose 5-phosphate and D-xylulose 5-phosphate (non-oxidative stage): step 2/3. Functionally, transaldolase is important for the balance of metabolites in the pentose-phosphate pathway. The protein is Probable transaldolase of Clostridium perfringens (strain 13 / Type A).